A 146-amino-acid chain; its full sequence is Probable acetyltransferase HI_0677 (146 aa).

The N-acetyltransferase domain occupies 1–146; the sequence is MKLFKAEQWN…ERLFELSLSC (146 aa).

The sequence is that of Probable acetyltransferase HI_0677 from Haemophilus influenzae (strain ATCC 51907 / DSM 11121 / KW20 / Rd).